Consider the following 481-residue polypeptide: Sialic acid-binding Ig-like lectin 16 (481 aa).

Positions 1–16 (MLLLPLLLPVLGAGSL) are cleaved as a signal peptide. At 17–434 (NKDPSYSLQV…VHCKSGPMTG (418 aa)) the chain is on the extracellular side. In terms of domain architecture, Ig-like V-type spans 19–122 (DPSYSLQVQR…DEAWYFFRVE (104 aa)). Disulfide bonds link C37-C174, C42-C102, C165-C216, and C259-C306. 2 N-linked (GlcNAc...) asparagine glycosylation sites follow: N43 and N78. R120 serves as a coordination point for N-acetylneuraminate. Ig-like C2-type domains lie at 147 to 232 (PDVY…RTVR), 238 to 322 (LELQ…LDLS), and 327 to 424 (PENL…LSFS). N338 and N347 each carry an N-linked (GlcNAc...) asparagine glycan. Cysteines 363 and 408 form a disulfide. A helical membrane pass occupies residues 435 to 455 (VVLVAVGEVAMKILLLCLCLI). At 456 to 481 (LLRVRSCRRKAARAALGMEAADAVTD) the chain is on the cytoplasmic side.

Belongs to the immunoglobulin superfamily. SIGLEC (sialic acid binding Ig-like lectin) family. Expressed in bone marrow, fetal brain, fetal liver, lung and salivary gland. Detected in brain, macrophage, cancerous esophagus and lung at protein level.

The protein localises to the membrane. Its function is as follows. Putative adhesion molecule that mediates sialic-acid dependent binding to cells. The protein is Sialic acid-binding Ig-like lectin 16 (SIGLEC16) of Homo sapiens (Human).